Here is a 427-residue protein sequence, read N- to C-terminus: Serine hydroxymethyltransferase (427 aa).

(6S)-5,6,7,8-tetrahydrofolate contacts are provided by residues Leu-122 and 126-128; that span reads GHL. Lys-231 is subject to N6-(pyridoxal phosphate)lysine. 355–357 is a binding site for (6S)-5,6,7,8-tetrahydrofolate; that stretch reads SPF.

This sequence belongs to the SHMT family. As to quaternary structure, homodimer. It depends on pyridoxal 5'-phosphate as a cofactor.

It is found in the cytoplasm. It catalyses the reaction (6R)-5,10-methylene-5,6,7,8-tetrahydrofolate + glycine + H2O = (6S)-5,6,7,8-tetrahydrofolate + L-serine. Its pathway is one-carbon metabolism; tetrahydrofolate interconversion. The protein operates within amino-acid biosynthesis; glycine biosynthesis; glycine from L-serine: step 1/1. Functionally, catalyzes the reversible interconversion of serine and glycine with tetrahydrofolate (THF) serving as the one-carbon carrier. This reaction serves as the major source of one-carbon groups required for the biosynthesis of purines, thymidylate, methionine, and other important biomolecules. Also exhibits THF-independent aldolase activity toward beta-hydroxyamino acids, producing glycine and aldehydes, via a retro-aldol mechanism. The sequence is that of Serine hydroxymethyltransferase from Nostoc punctiforme (strain ATCC 29133 / PCC 73102).